The primary structure comprises 298 residues: Protease HtpX (298 aa).

Transmembrane regions (helical) follow at residues 4 to 24 (IALY…TLSL) and 41 to 61 (TSLL…SLLI). Histidine 147 is a Zn(2+) binding site. Glutamate 148 is an active-site residue. A Zn(2+)-binding site is contributed by histidine 151. The next 2 membrane-spanning stretches (helical) occupy residues 162 to 182 (LIQG…GYVI) and 193 to 213 (GLGF…GIAA). Glutamate 225 contributes to the Zn(2+) binding site.

The protein belongs to the peptidase M48B family. Zn(2+) serves as cofactor.

The protein localises to the cell inner membrane. In Alcanivorax borkumensis (strain ATCC 700651 / DSM 11573 / NCIMB 13689 / SK2), this protein is Protease HtpX.